The primary structure comprises 336 residues: Serpentine receptor class beta-15 (336 aa).

A run of 7 helical transmembrane segments spans residues 24-44 (LFIH…FVIF), 57-77 (FLFS…AIIS), 109-129 (IFMS…FIAM), 142-162 (LGPI…FFIY), 186-206 (FTFF…NSYL), 237-257 (VFVV…IMIL), and 276-296 (GAFT…AVYL).

The protein belongs to the nematode receptor-like protein srb family.

The protein localises to the membrane. The polypeptide is Serpentine receptor class beta-15 (srb-15) (Caenorhabditis elegans).